Here is a 611-residue protein sequence, read N- to C-terminus: V-type proton ATPase catalytic subunit A (611 aa).

ATP is bound at residue 244–251 (GAFGCGKT).

Belongs to the ATPase alpha/beta chains family. In terms of assembly, V-ATPase is a heteromultimeric enzyme made up of two complexes: the ATP-hydrolytic V1 complex and the proton translocation V0 complex. The V1 complex consists of three catalytic AB heterodimers that form a heterohexamer, three peripheral stalks each consisting of EG heterodimers, one central rotor including subunits D and F, and the regulatory subunits C and H. The proton translocation complex V0 consists of the proton transport subunit a, a ring of proteolipid subunits c9c'', rotary subunit d and subunit e.

The protein resides in the cell membrane. It is found in the vacuole. The protein localises to the vesicle. The enzyme catalyses ATP + H2O + 4 H(+)(in) = ADP + phosphate + 5 H(+)(out). ATP hydrolysis occurs at the interface between the nucleotide-binding domains of subunits A and B. ATP hydrolysis triggers a conformational change in the subunits D and F, which induces a shift of subunit d. The c-ring is subsequently rotated and results in a continuous proton translocation across the membrane. Catalytic subunit of the V1 complex of vacuolar(H+)-ATPase (V-ATPase), a multisubunit enzyme composed of a peripheral complex (V1) that hydrolyzes ATP and a membrane integral complex (V0) that translocates protons. V-ATPase is responsible for acidifying and maintaining the pH of intracellular compartments and in some cell types, is targeted to the plasma membrane, where it is responsible for acidifying the extracellular environment. During the trophozoite stage, involved in the acidification of the extracellular space next to the cell membrane. This is V-type proton ATPase catalytic subunit A from Plasmodium falciparum (isolate 3D7).